Reading from the N-terminus, the 485-residue chain is NADH-quinone oxidoreductase subunit N (485 aa).

The next 14 helical transmembrane spans lie at 8–28 (LIAL…MLCI), 35–55 (FINS…LWFV), 75–95 (FYTG…YAWL), 105–125 (FYLL…ANHL), 127–147 (ALFL…GYAF), 159–179 (YTLL…LVYA), 203–223 (LLAG…LVPF), 235–255 (PVPV…AVVM), 271–291 (LVLA…ALSQ), 303–323 (IAHL…TLAL), 326–346 (VGVY…VVSL), 371–393 (LLSS…LGFI), 406–426 (HLGW…FYYL), and 449–469 (ALTA…LLGL).

It belongs to the complex I subunit 2 family. NDH-1 is composed of 13 different subunits. Subunits NuoA, H, J, K, L, M, N constitute the membrane sector of the complex.

The protein resides in the cell inner membrane. It carries out the reaction a quinone + NADH + 5 H(+)(in) = a quinol + NAD(+) + 4 H(+)(out). Its function is as follows. NDH-1 shuttles electrons from NADH, via FMN and iron-sulfur (Fe-S) centers, to quinones in the respiratory chain. The immediate electron acceptor for the enzyme in this species is believed to be ubiquinone. Couples the redox reaction to proton translocation (for every two electrons transferred, four hydrogen ions are translocated across the cytoplasmic membrane), and thus conserves the redox energy in a proton gradient. This is NADH-quinone oxidoreductase subunit N from Sodalis glossinidius (strain morsitans).